Reading from the N-terminus, the 1065-residue chain is Probable arabinosyltransferase B (1065 aa).

A run of 12 helical transmembrane segments spans residues 15-37, 204-226, 241-263, 394-413, 417-436, 441-463, 510-527, 540-557, 567-589, 596-618, 633-655, and 667-689; these read WVAT…LPVV, LKLA…LWRL, NWRT…HVIG, YSRL…TLGV, GLIA…RILV, VVGT…TVVF, FGFL…FIML, AWRL…LMFT, LFAA…AVLG, AFLA…WWYV, GGIT…AIWL, and LARA…VFIA.

Belongs to the emb family.

The protein resides in the cell membrane. In terms of biological role, arabinosyl transferase responsible for the polymerization of arabinose into the arabinan of arabinogalactan. The polypeptide is Probable arabinosyltransferase B (embB) (Mycobacterium avium).